The primary structure comprises 187 residues: Elongation factor P (187 aa).

The protein belongs to the elongation factor P family.

It localises to the cytoplasm. It functions in the pathway protein biosynthesis; polypeptide chain elongation. Functionally, involved in peptide bond synthesis. Stimulates efficient translation and peptide-bond synthesis on native or reconstituted 70S ribosomes in vitro. Probably functions indirectly by altering the affinity of the ribosome for aminoacyl-tRNA, thus increasing their reactivity as acceptors for peptidyl transferase. The chain is Elongation factor P from Synechococcus sp. (strain WH7803).